Reading from the N-terminus, the 99-residue chain is Integration host factor subunit alpha (99 aa).

The protein belongs to the bacterial histone-like protein family. In terms of assembly, heterodimer of an alpha and a beta chain.

Its function is as follows. This protein is one of the two subunits of integration host factor, a specific DNA-binding protein that functions in genetic recombination as well as in transcriptional and translational control. This is Integration host factor subunit alpha from Psychrobacter arcticus (strain DSM 17307 / VKM B-2377 / 273-4).